The chain runs to 316 residues: Cuticle collagen 7 (316 aa).

Positions 1–34 (MSSATFLSVMAGLSGIVVFGALISVFHIYSDINS) are cleaved as a signal peptide. Disordered regions lie at residues 78–269 (KQSQ…DAAY) and 281–316 (HRNVNRHRAAASKKRVVAKKRVAKKRVVAARRHVQA). The segment covering 79 to 90 (QSQCNCGQQASN) has biased composition (polar residues). Triple-helical region regions lie at residues 94–126 (GPPGPPGASGDKGHDGQPGQAGKPGQPGVAGPS), 139–198 (GLPG…PGKS), and 204–263 (GLPG…DGTP). Composition is skewed to low complexity over residues 110–125 (QPGQAGKPGQPGVAGP), 137–147 (PQGLPGPAGVP), and 177–198 (AGSAGSPGQAGAPGNPGSPGKS). Pro residues predominate over residues 209–221 (SGAPGPQGPPGAP). Residues 241–260 (PNGQPGHPGQDGQPGAPGND) are compositionally biased toward low complexity.

Belongs to the cuticular collagen family. As to quaternary structure, collagen polypeptide chains are complexed within the cuticle by disulfide bonds and other types of covalent cross-links.

Functionally, nematode cuticles are composed largely of collagen-like proteins. The cuticle functions both as an exoskeleton and as a barrier to protect the worm from its environment. This Caenorhabditis elegans protein is Cuticle collagen 7 (col-7).